The chain runs to 452 residues: MQFFGSLFVSLLGAAGLANALPSPGIPSNDKDLAIYPPVDANNTTSQDVVIDVVLFNGTEWISSRERFSLVSPGWASIYGPSGQSSVGSVLYSPILDYIDNAQLLVLDDVSFGVFSSLANSVTGYASNYTQSSSNSTSTMNSTGSVSGGSVYPTNSTTNSSISWNSSTSAATNTSSSSSSSSQSSVVSVNSEIFSYFGLSQQYVNYSTSRLCVVGTPRANMSTVSVTNNGSAVSNYTVNTNGWTSSNFKCVDDVVANIFGLDFYTAAVLSEVSILRSFALCNATTSSSLFRQIASYGVYGSFHFSSSESGSFANLIGTNNYFMTDVKSSSVVIVQSETSCSINSASMSSNTTYFYWNSTSSLSSSVFTNTTSSSNSTNSSIPTTYPSNSTTYQNITTSYPWSQPVVNITDYLSDNGDGHFVLAGDGNQTIGDFYVMNWTTIASGEYLVPFNY.

An N-terminal signal peptide occupies residues 1–20 (MQFFGSLFVSLLGAAGLANA). Residues 130-151 (TQSSSNSTSTMNSTGSVSGGSV) form a disordered region.

The protein resides in the endoplasmic reticulum. This is an uncharacterized protein from Schizosaccharomyces pombe (strain 972 / ATCC 24843) (Fission yeast).